Reading from the N-terminus, the 680-residue chain is MDRQFKRTLITTALPYANGPVHIGHLAGVYVPADIYARYLRLRGRDCLLIGGSDEHGVPIALKAKAEGCTPQEVVDRYHELIKRSFEGLGISFDIYSRTTSDIHRRTASEFFKTLYEKGEFVEQTSEQYYDEEAKQFLADRYIIGTCPHCSNDRAYGDQCEACGTSLNATDLIDPRSTISGSAPVLRETKHWYLPLDKHEPFLKEWILDGHKEWKSNVYGQCKSWLDMGLQPRAVSRDLDWGIPVPVEGAEGKVLYVWFDAPIGYISNTKELCPDSWETWWKSEDTRLVHFIGKDNIVFHCIVFPAMLRAEGSFILPDNVPANEFLNLEGDKISTSRNWAVWLHEYLEEFPGKQDVLRYVLTANAPETKDNDFTWRDFQARNNNELVAIFGNFVNRALVLTHKYFDGAVPPKGELTDCDSRTIEEFAAVKQALEHQLDTFHFREALKEAMNLARIGNKYLADTEPWKLAKTDMNRVATILNLSLQITANLAIAFEPFLPFSSAKLMSMLSTDCPFGWDRLGSTDLLPEGHVLGNPELLFEKLEDSVIDAQIQKLQDTKLANEKAAHQAAPIAEDIAFEDFLKLDIRVGTVLECEKVPKADKLLRFRIDDGLSGRTIVSGIAKHYAPEELVGKQVCFIANLPPRKLKGIESEGMILSAEDADGSLRVIMPAAEVAAGSQVK.

A 'HIGH' region motif is present at residues 15–25 (PYANGPVHIGH). Positions 147, 150, 160, and 163 each coordinate Zn(2+). A 'KMSKS' region motif is present at residues 332–336 (KISTS). ATP is bound at residue T335. The region spanning 579-680 (DFLKLDIRVG…AEVAAGSQVK (102 aa)) is the tRNA-binding domain.

Belongs to the class-I aminoacyl-tRNA synthetase family. MetG type 1 subfamily. In terms of assembly, homodimer. Zn(2+) serves as cofactor.

Its subcellular location is the cytoplasm. It catalyses the reaction tRNA(Met) + L-methionine + ATP = L-methionyl-tRNA(Met) + AMP + diphosphate. Is required not only for elongation of protein synthesis but also for the initiation of all mRNA translation through initiator tRNA(fMet) aminoacylation. The protein is Methionine--tRNA ligase of Porphyromonas gingivalis (strain ATCC BAA-308 / W83).